The following is a 410-amino-acid chain: Cytohesin-2 (410 aa).

The stretch at Pro-13–Ser-56 forms a coiled coil. The 188-residue stretch at Glu-54–Glu-241 folds into the SEC7 domain. Positions Asn-259–Ser-386 constitute a PH domain. Residues Lys-268–Ala-271, Arg-290, Tyr-301, Arg-311, Lys-349, Asn-360, and His-361 contribute to the a 1,2-diacyl-sn-glycero-3-phospho-(1D-myo-inositol-3,4,5-trisphosphate) site. The interval Arg-397 to Lys-405 is C-terminal autoinhibitory region.

Heteromer. Composed of TAMALIN, CYTH2 and at least one GRM1. Interacts with ARRB1. Interacts with ARL4D; the interaction is direct. Directly interacts with CCDC120 through the coiled coil domain; this interaction stabilizes CCDC120, possibly by preventing its ubiquitination, and is required for neurite growth in neuroblastoma cells. Interacts (via N-terminal domain) with INAVA (via N-terminal domain).

The protein resides in the cell membrane. The protein localises to the cytoplasm. It is found in the cell projection. It localises to the growth cone. Acts as a guanine-nucleotide exchange factor (GEF). Promotes guanine-nucleotide exchange on ARF1, ARF3 and ARF6. Promotes the activation of ARF factors through replacement of GDP with GTP. The cell membrane form, in association with ARL4 proteins, recruits ARF6 to the plasma membrane. Involved in neurite growth. In Bos taurus (Bovine), this protein is Cytohesin-2 (CYTH2).